The primary structure comprises 56 residues: Large ribosomal subunit protein bL32c (56 aa).

Belongs to the bacterial ribosomal protein bL32 family.

The protein resides in the plastid. The protein localises to the chloroplast. This is Large ribosomal subunit protein bL32c from Huperzia lucidula (Shining clubmoss).